The sequence spans 393 residues: Aspartate aminotransferase (393 aa).

G38, W124, and N174 together coordinate L-aspartate. K237 carries the post-translational modification N6-(pyridoxal phosphate)lysine.

The protein belongs to the class-I pyridoxal-phosphate-dependent aminotransferase family. As to quaternary structure, homodimer. Pyridoxal 5'-phosphate is required as a cofactor.

The protein resides in the cytoplasm. It carries out the reaction L-aspartate + 2-oxoglutarate = oxaloacetate + L-glutamate. The chain is Aspartate aminotransferase (aspC) from Geobacillus stearothermophilus (Bacillus stearothermophilus).